The primary structure comprises 116 residues: Protein Rev (116 aa).

Residues serine 5 and serine 8 each carry the phosphoserine; by host CK2 modification. The interval 18-26 is homomultimerization; sequence LIKFLYQSN. Residues 25–49 form a disordered region; sequence SNPPPSLEGTRQARRNRRRRWRERQ. The Nuclear localization signal and RNA-binding (RRE) signature appears at 34–50; the sequence is TRQARRNRRRRWRERQR. The segment covering 36–47 has biased composition (basic residues); sequence QARRNRRRRWRE. Residues 73-84 carry the Nuclear export signal and binding to XPO1 motif; it reads LPLPPLEKLTLD. Phosphoserine; by host occurs at positions 92 and 99. The tract at residues 92–116 is disordered; the sequence is SGTQGVGSPQILVESPAILEPGTKE.

The protein belongs to the HIV-1 REV protein family. As to quaternary structure, homomultimer; when bound to the RRE. Multimeric assembly is essential for activity and may involve XPO1. Binds to human KPNB1, XPO1, TNPO1, RANBP5 and IPO7. Interacts with the viral Integrase. Interacts with human KHDRBS1. Interacts with human NAP1; this interaction decreases Rev multimerization and stimulates its activity. Interacts with human DEAD-box helicases DDX3 and DDX24; these interactions may serve for viral RNA export to the cytoplasm and packaging, respectively. Interacts with human PSIP1; this interaction may inhibit HIV-1 DNA integration by promoting dissociation of the Integrase-LEDGF/p75 complex. In terms of processing, asymmetrically arginine dimethylated at one site by host PRMT6. Methylation impairs the RNA-binding activity and export of viral RNA from the nucleus to the cytoplasm. Phosphorylated by protein kinase CK2. Presence of, and maybe binding to the N-terminus of the regulatory beta subunit of CK2 is necessary for CK2-mediated Rev's phosphorylation.

Its subcellular location is the host nucleus. It localises to the host nucleolus. It is found in the host cytoplasm. Its function is as follows. Escorts unspliced or incompletely spliced viral pre-mRNAs (late transcripts) out of the nucleus of infected cells. These pre-mRNAs carry a recognition sequence called Rev responsive element (RRE) located in the env gene, that is not present in fully spliced viral mRNAs (early transcripts). This function is essential since most viral proteins are translated from unspliced or partially spliced pre-mRNAs which cannot exit the nucleus by the pathway used by fully processed cellular mRNAs. Rev itself is translated from a fully spliced mRNA that readily exits the nucleus. Rev's nuclear localization signal (NLS) binds directly to KPNB1/Importin beta-1 without previous binding to KPNA1/Importin alpha-1. KPNB1 binds to the GDP bound form of RAN (Ran-GDP) and targets Rev to the nucleus. In the nucleus, the conversion from Ran-GDP to Ran-GTP dissociates Rev from KPNB1 and allows Rev's binding to the RRE in viral pre-mRNAs. Rev multimerization on the RRE via cooperative assembly exposes its nuclear export signal (NES) to the surface. Rev can then form a complex with XPO1/CRM1 and Ran-GTP, leading to nuclear export of the complex. Conversion from Ran-GTP to Ran-GDP mediates dissociation of the Rev/RRE/XPO1/RAN complex, so that Rev can return to the nucleus for a subsequent round of export. Beside KPNB1, also seems to interact with TNPO1/Transportin-1, RANBP5/IPO5 and IPO7/RANBP7 for nuclear import. The nucleoporin-like HRB/RIP is an essential cofactor that probably indirectly interacts with Rev to release HIV RNAs from the perinuclear region to the cytoplasm. The chain is Protein Rev from Human immunodeficiency virus type 1 group M subtype B (strain 89.6) (HIV-1).